The sequence spans 228 residues: uncharacterized protein (228 aa).

The disordered stretch occupies residues 90-115 (TDESEESSSANNTTTTASHTLSNSKK). The span at 96–113 (SSSANNTTTTASHTLSNS) shows a compositional bias: low complexity.

The protein resides in the cytoplasm. The protein localises to the cell cortex. Its function is as follows. Deletion results in antifungal drug fluconazole-resistant phenotype. This is an uncharacterized protein from Saccharomyces cerevisiae (strain ATCC 204508 / S288c) (Baker's yeast).